We begin with the raw amino-acid sequence, 1033 residues long: PDZ domain-containing protein 7 (1033 aa).

PDZ domains follow at residues 86–168 (SVRV…RMGR) and 210–293 (IVHL…ETGR). Residues 323-344 (ESSSSVSSCASSAPYSSGSLPS) are compositionally biased toward low complexity. Disordered regions lie at residues 323 to 380 (ESSS…GGRV), 444 to 464 (KQQRKKEKSGSPGEKGALQRS), 754 to 864 (EPLS…KTVT), and 943 to 1033 (MELV…PRIP). Basic residues predominate over residues 770–784 (AQSRSRSRSRSRSRS). Positions 785 to 797 (SRGQGKSPGRRSP) are enriched in low complexity. Positions 862 to 934 (TVTLSKMKQS…QRAVDTIRRA (73 aa)) constitute a PDZ 3 domain. A compositionally biased stretch (pro residues) spans 991-1000 (PEPPTNPQTP).

In terms of assembly, homodimerizes (via PDZ2 domain). Component of USH2 complex, composed of ADGRV1, PDZD7, USH2A and WHRN. Interacts (via PDZ domains) with WHRN; the interaction is direct. Interacts with USH1G. Interacts with ADGRV1 (via the cytoplasmic region). Interacts with USH2A (via the cytoplasmic region). Interacts with MYO7A (via MyTH4-FERM domains). In terms of tissue distribution, weakly expressed in the inner ear. Expressed in the retinal pigment epithelium.

It localises to the cell projection. The protein resides in the cilium. The protein localises to the nucleus. Its subcellular location is the stereocilium. In cochlear developing hair cells, essential in organizing the USH2 complex at stereocilia ankle links. Blocks inhibition of adenylate cyclase activity mediated by ADGRV1. The polypeptide is PDZ domain-containing protein 7 (Homo sapiens (Human)).